Consider the following 424-residue polypeptide: Histidinol dehydrogenase (424 aa).

Y124, Q186, and N209 together coordinate NAD(+). Substrate-binding residues include S232, Q254, and H257. The Zn(2+) site is built by Q254 and H257. Residues E322 and H323 each act as proton acceptor in the active site. Positions 323, 356, 410, and 415 each coordinate substrate. A Zn(2+)-binding site is contributed by D356. Zn(2+) is bound at residue H415.

It belongs to the histidinol dehydrogenase family. Zn(2+) serves as cofactor.

The catalysed reaction is L-histidinol + 2 NAD(+) + H2O = L-histidine + 2 NADH + 3 H(+). Its pathway is amino-acid biosynthesis; L-histidine biosynthesis; L-histidine from 5-phospho-alpha-D-ribose 1-diphosphate: step 9/9. Catalyzes the sequential NAD-dependent oxidations of L-histidinol to L-histidinaldehyde and then to L-histidine. This chain is Histidinol dehydrogenase, found in Moorella thermoacetica (strain ATCC 39073 / JCM 9320).